A 404-amino-acid chain; its full sequence is Spore development regulator RYP2 (404 aa).

3 disordered regions span residues 1-46 (MSAP…RKAV), 200-231 (LLKR…SSQQ), and 382-404 (SGQS…PAWG). Residues 17 to 194 (LQSADFRLTV…ADQGVKLRIR (178 aa)) enclose the Velvet domain. Residues 29-46 (NPERARVAGGKEKERKAV) are compositionally biased toward basic and acidic residues. Over residues 382–397 (SGQSFSQSAGHMQSPS) the composition is skewed to polar residues.

This sequence belongs to the velvet family. VosA subfamily. In terms of assembly, forms a heterodimeric complex with RYP3; the formation of the RYP2-RYP3 complex is light-dependent.

Its subcellular location is the nucleus. Component of the RYP2-RYP3 heterodimeric complex that plays a dual role in activating genes associated with spore maturation and repressing certain development-associated genes. The complex binds DNA through the DNA-binding domain of vosA that recognizes an 11-nucleotide consensus sequence 5'-CTGGCCGCGGC-3' consisting of two motifs in the promoters of key developmental regulatory genes. Required for viable spore production and regulation of sporulation in response to temperature and for the switch to yeast-form in the presence of host cells. The protein is Spore development regulator RYP2 of Ajellomyces capsulatus (Darling's disease fungus).